The sequence spans 373 residues: Dual-specificity RNA methyltransferase RlmN (373 aa).

Glu-94 serves as the catalytic Proton acceptor. One can recognise a Radical SAM core domain in the interval 100 to 339; it reads EDDRATLCVS…VIVRKTRGDD (240 aa). The cysteines at positions 107 and 344 are disulfide-linked. 3 residues coordinate [4Fe-4S] cluster: Cys-114, Cys-118, and Cys-121. S-adenosyl-L-methionine contacts are provided by residues 168–169, Ser-200, 222–224, and Asn-301; these read GE and SIH. The S-methylcysteine intermediate role is filled by Cys-344.

The protein belongs to the radical SAM superfamily. RlmN family. [4Fe-4S] cluster is required as a cofactor.

The protein resides in the cytoplasm. It catalyses the reaction adenosine(2503) in 23S rRNA + 2 reduced [2Fe-2S]-[ferredoxin] + 2 S-adenosyl-L-methionine = 2-methyladenosine(2503) in 23S rRNA + 5'-deoxyadenosine + L-methionine + 2 oxidized [2Fe-2S]-[ferredoxin] + S-adenosyl-L-homocysteine. It carries out the reaction adenosine(37) in tRNA + 2 reduced [2Fe-2S]-[ferredoxin] + 2 S-adenosyl-L-methionine = 2-methyladenosine(37) in tRNA + 5'-deoxyadenosine + L-methionine + 2 oxidized [2Fe-2S]-[ferredoxin] + S-adenosyl-L-homocysteine. Functionally, specifically methylates position 2 of adenine 2503 in 23S rRNA and position 2 of adenine 37 in tRNAs. m2A2503 modification seems to play a crucial role in the proofreading step occurring at the peptidyl transferase center and thus would serve to optimize ribosomal fidelity. The sequence is that of Dual-specificity RNA methyltransferase RlmN from Shewanella putrefaciens (strain CN-32 / ATCC BAA-453).